A 420-amino-acid polypeptide reads, in one-letter code: uncharacterized protein (420 aa).

Disordered regions lie at residues 84–103 and 122–211; these read RSQA…GTSE and SMNN…NKKS. Residues 85–103 are compositionally biased toward polar residues; the sequence is SQANSESTPPEHTWSGTSE. Residues 184–199 are compositionally biased toward basic and acidic residues; the sequence is SMTDQEVEQRRKEANK. Coiled coils occupy residues 265–310 and 345–374; these read TEKE…TATN and LQFK…NFKE. A compositionally biased stretch (polar residues) spans 399–408; that stretch reads KTSSPKTSIA. Residues 399 to 420 form a disordered region; sequence KTSSPKTSIAGSHRRSTRSSEN. Residues 410–420 are compositionally biased toward basic residues; that stretch reads SHRRSTRSSEN.

This is an uncharacterized protein from Caenorhabditis elegans.